We begin with the raw amino-acid sequence, 169 residues long: N-alpha-acetyltransferase 50 (169 aa).

One can recognise an N-acetyltransferase domain in the interval 6–155 (IELGDVTPHN…DAHVLQKNLK (150 aa)). T12 is modified (phosphothreonine). Residue Y31 coordinates substrate. An N6-acetyllysine mark is found at K34 and K37. Y73 is an active-site residue. M75 provides a ligand contact to substrate. 77-90 (LGCLAPYRRLGIGT) is an acetyl-CoA binding site. Y110 is subject to Phosphotyrosine. Residue H112 is part of the active site. 117–126 (NESAIDFYRK) provides a ligand contact to CoA. The tract at residues 138–141 (YYKR) is substrate. The residue at position 140 (K140) is an N6-acetyllysine.

The protein belongs to the acetyltransferase family. GNAT subfamily. In terms of assembly, component of the N-terminal acetyltransferase E (NatE) complex at least composed of NAA10, NAA15 and NAA50. Interacts with NAA10. Interacts with NAA15. Predominantly interacts with NAA15 in the N-terminal acetyltransferase A complex (NatA complex); the interactions reduce the acetylation activity of the NatA complex. Component of the N-terminal acetyltransferase E (NatE)/HYPK complex at least composed of NAA10, NAA15, NAA50 and HYPK. Within the complex interacts with NAA15. Its capacity to interact with the NatA complex is reduced by HYPK. Interacts with NAA35.

It is found in the cytoplasm. The protein localises to the nucleus. The enzyme catalyses N-terminal L-methionyl-L-alanyl-[protein] + acetyl-CoA = N-terminal N(alpha)-acetyl-L-methionyl-L-alanyl-[protein] + CoA + H(+). The catalysed reaction is N-terminal L-methionyl-L-seryl-[protein] + acetyl-CoA = N-terminal N(alpha)-acetyl-L-methionyl-L-seryl-[protein] + CoA + H(+). It carries out the reaction N-terminal L-methionyl-L-valyl-[protein] + acetyl-CoA = N-terminal N(alpha)-acetyl-L-methionyl-L-valyl-[protein] + CoA + H(+). It catalyses the reaction N-terminal L-methionyl-L-threonyl-[protein] + acetyl-CoA = N-terminal N(alpha)-acetyl-L-methionyl-L-threonyl-[protein] + CoA + H(+). The enzyme catalyses N-terminal L-methionyl-L-lysyl-[protein] + acetyl-CoA = N-terminal N(alpha)-acetyl-L-methionyl-L-lysyl-[protein] + CoA + H(+). The catalysed reaction is N-terminal L-methionyl-L-leucyl-[protein] + acetyl-CoA = N-terminal N(alpha)-acetyl-L-methionyl-L-leucyl-[protein] + CoA + H(+). It carries out the reaction N-terminal L-methionyl-L-phenylalanyl-[protein] + acetyl-CoA = N-terminal N(alpha)-acetyl-L-methionyl-L-phenylalanyl-[protein] + CoA + H(+). It catalyses the reaction N-terminal L-methionyl-L-tyrosyl-[protein] + acetyl-CoA = N-terminal N(alpha)-acetyl-L-methionyl-L-tyrosyl-[protein] + CoA + H(+). In terms of biological role, N-alpha-acetyltransferase that acetylates the N-terminus of proteins that retain their initiating methionine. Has a broad substrate specificity: able to acetylate the initiator methionine of most peptides, except for those with a proline in second position. Also displays N-epsilon-acetyltransferase activity by mediating acetylation of the side chain of specific lysines on proteins. Autoacetylates in vivo. The relevance of N-epsilon-acetyltransferase activity is however unclear: able to acetylate H4 in vitro, but this result has not been confirmed in vivo. Component of N-alpha-acetyltransferase complexes containing NAA10 and NAA15, which has N-alpha-acetyltransferase activity. Does not influence the acetyltransferase activity of NAA10. However, it negatively regulates the N-alpha-acetyltransferase activity of the N-terminal acetyltransferase A complex (also called the NatA complex). The multiprotein complexes probably constitute the major contributor for N-terminal acetylation at the ribosome exit tunnel, with NAA10 acetylating all amino termini that are devoid of methionine and NAA50 acetylating other peptides. Required for sister chromatid cohesion during mitosis by promoting binding of CDCA5/sororin to cohesin: may act by counteracting the function of NAA10. The chain is N-alpha-acetyltransferase 50 (NAA50) from Bos taurus (Bovine).